Here is a 384-residue protein sequence, read N- to C-terminus: Succinyl-diaminopimelate desuccinylase (384 aa).

His71 is a Zn(2+) binding site. The active site involves Asp73. Residue Asp104 coordinates Zn(2+). Glu138 (proton acceptor) is an active-site residue. Positions 139, 167, and 357 each coordinate Zn(2+).

This sequence belongs to the peptidase M20A family. DapE subfamily. As to quaternary structure, homodimer. Zn(2+) serves as cofactor. It depends on Co(2+) as a cofactor.

It catalyses the reaction N-succinyl-(2S,6S)-2,6-diaminopimelate + H2O = (2S,6S)-2,6-diaminopimelate + succinate. The protein operates within amino-acid biosynthesis; L-lysine biosynthesis via DAP pathway; LL-2,6-diaminopimelate from (S)-tetrahydrodipicolinate (succinylase route): step 3/3. Its function is as follows. Catalyzes the hydrolysis of N-succinyl-L,L-diaminopimelic acid (SDAP), forming succinate and LL-2,6-diaminopimelate (DAP), an intermediate involved in the bacterial biosynthesis of lysine and meso-diaminopimelic acid, an essential component of bacterial cell walls. The chain is Succinyl-diaminopimelate desuccinylase from Blochmanniella floridana.